The chain runs to 334 residues: Thiamine thiazole synthase (334 aa).

Substrate is bound by residues cysteine 86, 107–108, glycine 115, and valine 183; that span reads EA. Cysteine 221 carries the post-translational modification 2,3-didehydroalanine (Cys). Substrate is bound by residues aspartate 223, histidine 238, methionine 290, and 300–302; that span reads RMG.

Belongs to the THI4 family. In terms of assembly, homooctamer. Fe cation serves as cofactor. During the catalytic reaction, a sulfide is transferred from Cys-221 to a reaction intermediate, generating a dehydroalanine residue.

The protein localises to the cytoplasm. The protein resides in the nucleus. The catalysed reaction is [ADP-thiazole synthase]-L-cysteine + glycine + NAD(+) = [ADP-thiazole synthase]-dehydroalanine + ADP-5-ethyl-4-methylthiazole-2-carboxylate + nicotinamide + 3 H2O + 2 H(+). Involved in biosynthesis of the thiamine precursor thiazole. Catalyzes the conversion of NAD and glycine to adenosine diphosphate 5-(2-hydroxyethyl)-4-methylthiazole-2-carboxylic acid (ADT), an adenylated thiazole intermediate. The reaction includes an iron-dependent sulfide transfer from a conserved cysteine residue of the protein to a thiazole intermediate. The enzyme can only undergo a single turnover, which suggests it is a suicide enzyme. May have additional roles in adaptation to various stress conditions and in DNA damage tolerance. This is Thiamine thiazole synthase from Ajellomyces capsulatus (strain G186AR / H82 / ATCC MYA-2454 / RMSCC 2432) (Darling's disease fungus).